Reading from the N-terminus, the 162-residue chain is Peptide methionine sulfoxide reductase MsrA (162 aa).

The active site involves cysteine 16.

It belongs to the MsrA Met sulfoxide reductase family.

It carries out the reaction L-methionyl-[protein] + [thioredoxin]-disulfide + H2O = L-methionyl-(S)-S-oxide-[protein] + [thioredoxin]-dithiol. The catalysed reaction is [thioredoxin]-disulfide + L-methionine + H2O = L-methionine (S)-S-oxide + [thioredoxin]-dithiol. In terms of biological role, has an important function as a repair enzyme for proteins that have been inactivated by oxidation. Catalyzes the reversible oxidation-reduction of methionine sulfoxide in proteins to methionine. The chain is Peptide methionine sulfoxide reductase MsrA from Geobacter metallireducens (strain ATCC 53774 / DSM 7210 / GS-15).